The chain runs to 391 residues: uncharacterized protein (391 aa).

This is an uncharacterized protein from Sinorhizobium fredii (strain NBRC 101917 / NGR234).